The following is a 497-amino-acid chain: tRNA-2-methylthio-N(6)-dimethylallyladenosine synthase (497 aa).

Residues 1–10 (MTLLDSDSRQ) are compositionally biased toward basic and acidic residues. The interval 1–26 (MTLLDSDSRQSAEVLPAAGPAPDRPR) is disordered. An MTTase N-terminal domain is found at 26–142 (RTYQVRTFGC…LPVLLERARI (117 aa)). Residues cysteine 35, cysteine 71, cysteine 105, cysteine 179, cysteine 183, and cysteine 186 each coordinate [4Fe-4S] cluster. One can recognise a Radical SAM core domain in the interval 165 to 395 (RESVYAAWVA…VALVEQIALE (231 aa)). Residues 398–464 (QAQVGRVVEV…PHCLIADQVL (67 aa)) enclose the TRAM domain.

It belongs to the methylthiotransferase family. MiaB subfamily. In terms of assembly, monomer. [4Fe-4S] cluster is required as a cofactor.

The protein localises to the cytoplasm. The enzyme catalyses N(6)-dimethylallyladenosine(37) in tRNA + (sulfur carrier)-SH + AH2 + 2 S-adenosyl-L-methionine = 2-methylsulfanyl-N(6)-dimethylallyladenosine(37) in tRNA + (sulfur carrier)-H + 5'-deoxyadenosine + L-methionine + A + S-adenosyl-L-homocysteine + 2 H(+). Functionally, catalyzes the methylthiolation of N6-(dimethylallyl)adenosine (i(6)A), leading to the formation of 2-methylthio-N6-(dimethylallyl)adenosine (ms(2)i(6)A) at position 37 in tRNAs that read codons beginning with uridine. In Acidothermus cellulolyticus (strain ATCC 43068 / DSM 8971 / 11B), this protein is tRNA-2-methylthio-N(6)-dimethylallyladenosine synthase.